Consider the following 561-residue polypeptide: MTLQSESRFYYQLLAAVLIPALFVAWAARLRQNRKYPPGPKGIPIFGNLFQLSTRPWIEFSAFKEQYGPLVYLNIVGQPLLITNTHTAATDLFDRRGGVYSDRPRSIVADYLTGGLYLPFARHGPTWLKLRRAGHAFMHKGVAHKYRDTQFKEALTLTHHLLQSPSGRRRQLFESAEASIHSIVYDQPSSGGPVYPKMTDFSTLINKAVTPLFTPAEFLPLMQYVPSWLAGWKRRAQQGFVLFSELCEGLLEEVAKRVDAGDDRPSMAGGLIREREKHGLTNLEAAWLSGMMILVGTETNTLAMSWFLYAMIAYPDKQKRCQAELDAVVGRSRMPTFEDLEKLPYLRATIREILRWRPSIPVGARHYTTKDDWYQGYFIPKGTICFPNVWSLNHDPAIYGTDADHFNPGRFIDKDGGLSPAIPATKDGAFLIPHHDLHNSHGLNPPKMQKVCLRFIDLHTFRSKYPLSIAVPGHVSYGFGSRICLGRHIANDALFINFASILWATSISPAMNANTGKPDVPDKLAYSNLGLLIVPTTTECVIQPRFDEAEGILAQTRELCM.

Residues 8–28 (RFYYQLLAAVLIPALFVAWAA) form a helical membrane-spanning segment. C484 is a binding site for heme.

This sequence belongs to the cytochrome P450 family. The cofactor is heme.

It localises to the membrane. Its pathway is secondary metabolite biosynthesis. Functionally, cytochrome P450 monooxygenase; part of the gene cluster that mediates the biosynthesis of the psychoactive metabolites ibotenic acid and muscimol. The first committed step is glutamate hydroxylation by the 2-oxoglutarate-dependent dioxygenase iboH, and the last step is decarboxylation of ibotenic acid to muscimol by the decarboxylase iboD. The order of the intermediate reactions is somewhat ambiguous. IboA likely activates the carboxylic acid at position 5 to introduce an amide bond, and the flavin monooxygenase iboF generates the N-O bond. There are several options for the latter step. One option is that iboF directly hydroxylates the amide nitrogen formed by iboA to produce a hydroxamic acid species. Another option is that iboF hydroxylates an external N-containing compound, whose resulting N-O bond is subsequently introduced into the hydroxyglutamate scaffold. The paralogous PLP-dependent cystathionine gamma-synthase-like enzymes iboG1 and iboG2 are likely involved in substitution of the OH group at position 3 by the O-N moiety. The first cyclic intermediate is most probably tricholomic acid which is likely desaturated to ibotenic acid by the cytochrome P450 monooxygenase iboC. The polypeptide is Cytochrome P450 monooxygenase iboC (Amanita muscaria (strain Koide BX008)).